The chain runs to 524 residues: Sensitive to high expression protein 9 homolog, mitochondrial (524 aa).

The stretch at 92–133 forms a coiled coil; the sequence is EAILKKQREDQDKKKKMEQERKRLEQEREVDRRREEKRAKEE. Basic and acidic residues-rich tracts occupy residues 94–161 and 168–183; these read ILKK…EKLE and ESGK…RETV. The tract at residues 94-190 is disordered; that stretch reads ILKKQREDQD…ETVVETEEEE (97 aa). Coiled coils occupy residues 270 to 304 and 338 to 371; these read YSAI…YGEA and RNDH…LTQS. Residues 392-412 form a helical membrane-spanning segment; sequence WGTWVLMGLNVLLFVVATFIV. Over 413–502 the chain is Mitochondrial intermembrane; it reads EPWKRSKLVS…NLEFDKFEFE (90 aa). Residues 503–523 traverse the membrane as a helical segment; it reads LFTMTVAIVAFSMGSLIVSLF. K524 is a topological domain (mitochondrial matrix).

Belongs to the SHE9 family. As to quaternary structure, homooligomer.

It is found in the mitochondrion inner membrane. Functionally, required for the maintenance of the structure of the mitochondrial inner membrane. Involved in mitochondrial morphology. Causes growth arrest when highly overexpressed. This is Sensitive to high expression protein 9 homolog, mitochondrial (SHE9) from Candida albicans (strain SC5314 / ATCC MYA-2876) (Yeast).